The following is a 95-amino-acid chain: MAIDAATVRKVARLARIATPEERLEPLAQELNGIMTWIEQLAEVDTDGCEPLTSVVAAGLPLREDVVTMGGDPARVTSNAPKSINNFFVVPKVVE.

It belongs to the GatC family. Heterotrimer of A, B and C subunits.

It catalyses the reaction L-glutamyl-tRNA(Gln) + L-glutamine + ATP + H2O = L-glutaminyl-tRNA(Gln) + L-glutamate + ADP + phosphate + H(+). It carries out the reaction L-aspartyl-tRNA(Asn) + L-glutamine + ATP + H2O = L-asparaginyl-tRNA(Asn) + L-glutamate + ADP + phosphate + 2 H(+). Its function is as follows. Allows the formation of correctly charged Asn-tRNA(Asn) or Gln-tRNA(Gln) through the transamidation of misacylated Asp-tRNA(Asn) or Glu-tRNA(Gln) in organisms which lack either or both of asparaginyl-tRNA or glutaminyl-tRNA synthetases. The reaction takes place in the presence of glutamine and ATP through an activated phospho-Asp-tRNA(Asn) or phospho-Glu-tRNA(Gln). This Caulobacter vibrioides (strain ATCC 19089 / CIP 103742 / CB 15) (Caulobacter crescentus) protein is Glutamyl-tRNA(Gln) amidotransferase subunit C.